We begin with the raw amino-acid sequence, 382 residues long: uncharacterized protein (382 aa).

One can recognise a PE domain in the interval 1 to 92; the sequence is MQFLSVIPEQ…GATAYRNTEF (92 aa). Transmembrane regions (helical) follow at residues 23–43, 155–175, 203–223, 230–250, 261–281, 284–304, 315–335, and 347–367; these read SALS…VSAA, AAVA…NGVV, FIVA…AVVG, TFLT…LAGV, LASG…VQLF, AFLL…IAVV, LVVP…AQFA, and LGAP…QGIG.

The protein belongs to the mycobacterial PE family.

It localises to the cell membrane. This is an uncharacterized protein from Mycobacterium bovis (strain ATCC BAA-935 / AF2122/97).